The chain runs to 105 residues: Large ribosomal subunit protein bL21 (105 aa).

This sequence belongs to the bacterial ribosomal protein bL21 family. As to quaternary structure, part of the 50S ribosomal subunit. Contacts protein L20.

In terms of biological role, this protein binds to 23S rRNA in the presence of protein L20. The polypeptide is Large ribosomal subunit protein bL21 (Stenotrophomonas maltophilia (strain R551-3)).